The sequence spans 278 residues: Large ribosomal subunit protein uL2 (278 aa).

The interval 222-278 is disordered; the sequence is GVVMNPIDHPHGGGEGRTSGGRHPVTPWGKPTKGKKTRSNKSTDKFILISRHKRKKK.

Belongs to the universal ribosomal protein uL2 family. In terms of assembly, part of the 50S ribosomal subunit. Forms a bridge to the 30S subunit in the 70S ribosome.

Functionally, one of the primary rRNA binding proteins. Required for association of the 30S and 50S subunits to form the 70S ribosome, for tRNA binding and peptide bond formation. It has been suggested to have peptidyltransferase activity; this is somewhat controversial. Makes several contacts with the 16S rRNA in the 70S ribosome. This chain is Large ribosomal subunit protein uL2, found in Rhodopseudomonas palustris (strain BisB5).